A 357-amino-acid polypeptide reads, in one-letter code: SrfA-induced gene J protein (357 aa).

Residues 1-29 (MGRVEDQIKDNYNSLSHEGERLNREAKIE) are disordered. Residues 5–51 (EDQIKDNYNSLSHEGERLNREAKIESEKLKNNAKLDAKDMKKDIDES) are a coiled coil. Positions 17–29 (HEGERLNREAKIE) are enriched in basic and acidic residues. Asn114, Asn157, and Asn172 each carry an N-linked (GlcNAc...) asparagine glycan. Coiled-coil stretches lie at residues 150–177 (KNFK…SNKI) and 223–270 (DETK…DAIE). The helical transmembrane segment at 290–307 (IWGSIGLIGGATATSYLF) threads the bilayer.

It localises to the membrane. The sequence is that of SrfA-induced gene J protein (sigJ) from Dictyostelium discoideum (Social amoeba).